The following is a 1430-amino-acid chain: Gag-Pol polyprotein (1430 aa).

Residue G2 is the site of N-myristoyl glycine; by host attachment. The tract at residues 7–31 (VLSGGKLDAWEKIRLKPGGKKRYRL) is interaction with Gp41. Residues 8–43 (LSGGKLDAWEKIRLKPGGKKRYRLKHLVWASRELER) are interaction with host CALM1. The tract at residues 12 to 19 (KLDAWEKI) is interaction with host AP3D1. Residues 14 to 33 (DAWEKIRLKPGGKKRYRLKH) form an interaction with membrane phosphatidylinositol 4,5-bisphosphate and RNA region. A Nuclear export signal motif is present at residues 16-22 (WEKIRLK). A Nuclear localization signal motif is present at residues 26–32 (KKRYRLK). Residues 73–77 (EELKS) are interaction with membrane phosphatidylinositol 4,5-bisphosphate. The segment at 105 to 124 (QEEQDKSQQKEQQKAADKEV) is disordered. Phosphotyrosine; by host is present on Y128. The interval 185 to 223 (NTVGGHQAAMQMLKDTINEEAAEWDRLHPVHAGPIPPGQ) is interaction with human PPIA/CYPA and NUP153. The interval 273–359 (YSPVSILDIK…GGPGHKARIL (87 aa)) is dimerization/Multimerization of capsid protein p24. 2 consecutive CCHC-type zinc fingers follow at residues 385 to 402 (VKCF…NCRA) and 406 to 423 (KGCW…DCTE). A disordered region spans residues 440–479 (ARKFSSEQTRANSPASRELRVRRGDNPLPEAGAERRGTGS). The segment covering 445 to 454 (SEQTRANSPA) has biased composition (polar residues). Positions 484–488 (PQITL) are dimerization of protease. Residues 503–572 (REALLDTGAD…TPVNIIGRNL (70 aa)) form the Peptidase A2 domain. Residue D508 is the For protease activity; shared with dimeric partner of the active site. 2 dimerization of protease regions span residues 532-538 (GIGGFIK) and 571-583 (NLLT…LNFP). A Reverse transcriptase domain is found at 626-816 (EGKISKIGPE…PPFLWMGYEL (191 aa)). Mg(2+) is bound by residues D692, D767, and D768. The tract at residues 809 to 817 (FLWMGYELH) is RT 'primer grip'. The Tryptophan repeat motif motif lies at 980-996 (WEIWWTEYWQATWIPEW). The region spanning 1016-1139 (IAGAETFYVD…VDKLVSSGIR (124 aa)) is the RNase H type-1 domain. 4 residues coordinate Mg(2+): D1025, E1060, D1080, and D1131. An Integrase-type zinc finger spans residues 1145-1186 (DGIDKAQEEHEKYHNNWRAMASDFNLPPVVAKEIVANCDKCQ). Zn(2+) contacts are provided by H1154, H1158, C1182, and C1185. Residues 1196 to 1346 (VDCSPGIWQL…SAGERIIDII (151 aa)) enclose the Integrase catalytic domain. Mg(2+) contacts are provided by D1206, D1258, and E1294. Residues 1365-1412 (FRVYFRDSRDPVWKGPAKLLWKGEGAVVIQDNNEIKVVPRRKAKIIRD) constitute a DNA-binding region (integrase-type).

As to quaternary structure, homotrimer; further assembles as hexamers of trimers. Interacts with gp41 (via C-terminus). Interacts with host CALM1; this interaction induces a conformational change in the Matrix protein, triggering exposure of the myristate group. Interacts with host AP3D1; this interaction allows the polyprotein trafficking to multivesicular bodies during virus assembly. Part of the pre-integration complex (PIC) which is composed of viral genome, matrix protein, Vpr and integrase. Homodimer; the homodimer further multimerizes as homohexamers or homopentamers. Interacts with human PPIA/CYPA; This interaction stabilizes the capsid. Interacts with human NUP153. Interacts with host PDZD8; this interaction stabilizes the capsid. Interacts with monkey TRIM5; this interaction destabilizes the capsid. In terms of assembly, homodimer, whose active site consists of two apposed aspartic acid residues. As to quaternary structure, heterodimer of p66 RT and p51 RT (RT p66/p51). Heterodimerization of RT is essential for DNA polymerase activity. The overall folding of the subdomains is similar in p66 RT and p51 RT but the spatial arrangements of the subdomains are dramatically different. Homotetramer; may further associate as a homohexadecamer. Part of the pre-integration complex (PIC) which is composed of viral genome, matrix protein, Vpr and integrase. Interacts with human SMARCB1/INI1 and human PSIP1/LEDGF isoform 1. Interacts with human KPNA3; this interaction might play a role in nuclear import of the pre-integration complex. Interacts with human NUP153; this interaction might play a role in nuclear import of the pre-integration complex. It depends on Mg(2+) as a cofactor. Specific enzymatic cleavages by the viral protease yield mature proteins. The protease is released by autocatalytic cleavage. The polyprotein is cleaved during and after budding, this process is termed maturation. Proteolytic cleavage of p66 RT removes the RNase H domain to yield the p51 RT subunit. Nucleocapsid protein p7 might be further cleaved after virus entry. In terms of processing, tyrosine phosphorylated presumably in the virion by a host kinase. Phosphorylation is apparently not a major regulator of membrane association. Post-translationally, phosphorylated possibly by host MAPK1; this phosphorylation is necessary for Pin1-mediated virion uncoating. Methylated by host PRMT6, impairing its function by reducing RNA annealing and the initiation of reverse transcription.

It is found in the host cell membrane. Its subcellular location is the host endosome. The protein resides in the host multivesicular body. The protein localises to the virion membrane. It localises to the host nucleus. It is found in the host cytoplasm. Its subcellular location is the virion. The enzyme catalyses Specific for a P1 residue that is hydrophobic, and P1' variable, but often Pro.. The catalysed reaction is Endohydrolysis of RNA in RNA/DNA hybrids. Three different cleavage modes: 1. sequence-specific internal cleavage of RNA. Human immunodeficiency virus type 1 and Moloney murine leukemia virus enzymes prefer to cleave the RNA strand one nucleotide away from the RNA-DNA junction. 2. RNA 5'-end directed cleavage 13-19 nucleotides from the RNA end. 3. DNA 3'-end directed cleavage 15-20 nucleotides away from the primer terminus.. It carries out the reaction 3'-end directed exonucleolytic cleavage of viral RNA-DNA hybrid.. It catalyses the reaction DNA(n) + a 2'-deoxyribonucleoside 5'-triphosphate = DNA(n+1) + diphosphate. Protease: The viral protease is inhibited by many synthetic protease inhibitors (PIs), such as amprenavir, atazanavir, indinavir, loprinavir, nelfinavir, ritonavir and saquinavir. Use of protease inhibitors in tritherapy regimens permit more ambitious therapeutic strategies. Reverse transcriptase/ribonuclease H: RT can be inhibited either by nucleoside RT inhibitors (NRTIs) or by non nucleoside RT inhibitors (NNRTIs). NRTIs act as chain terminators, whereas NNRTIs inhibit DNA polymerization by binding a small hydrophobic pocket near the RT active site and inducing an allosteric change in this region. Classical NRTIs are abacavir, adefovir (PMEA), didanosine (ddI), lamivudine (3TC), stavudine (d4T), tenofovir (PMPA), zalcitabine (ddC), and zidovudine (AZT). Classical NNRTIs are atevirdine (BHAP U-87201E), delavirdine, efavirenz (DMP-266), emivirine (I-EBU), and nevirapine (BI-RG-587). The tritherapies used as a basic effective treatment of AIDS associate two NRTIs and one NNRTI. In terms of biological role, mediates, with Gag polyprotein, the essential events in virion assembly, including binding the plasma membrane, making the protein-protein interactions necessary to create spherical particles, recruiting the viral Env proteins, and packaging the genomic RNA via direct interactions with the RNA packaging sequence (Psi). Gag-Pol polyprotein may regulate its own translation, by the binding genomic RNA in the 5'-UTR. At low concentration, the polyprotein would promote translation, whereas at high concentration, the polyprotein would encapsidate genomic RNA and then shut off translation. Targets the polyprotein to the plasma membrane via a multipartite membrane-binding signal, that includes its myristoylated N-terminus. Matrix protein is part of the pre-integration complex. Implicated in the release from host cell mediated by Vpu. Binds to RNA. Functionally, forms the conical core that encapsulates the genomic RNA-nucleocapsid complex in the virion. Most core are conical, with only 7% tubular. The core is constituted by capsid protein hexamer subunits. The core is disassembled soon after virion entry. Host restriction factors such as TRIM5-alpha or TRIMCyp bind retroviral capsids and cause premature capsid disassembly, leading to blocks in reverse transcription. Capsid restriction by TRIM5 is one of the factors which restricts HIV-1 to the human species. Host PIN1 apparently facilitates the virion uncoating. On the other hand, interactions with PDZD8 or CYPA stabilize the capsid. Its function is as follows. Encapsulates and protects viral dimeric unspliced genomic RNA (gRNA). Binds these RNAs through its zinc fingers. Acts as a nucleic acid chaperone which is involved in rearangement of nucleic acid secondary structure during gRNA retrotranscription. Also facilitates template switch leading to recombination. As part of the polyprotein, participates in gRNA dimerization, packaging, tRNA incorporation and virion assembly. In terms of biological role, aspartyl protease that mediates proteolytic cleavages of Gag and Gag-Pol polyproteins during or shortly after the release of the virion from the plasma membrane. Cleavages take place as an ordered, step-wise cascade to yield mature proteins. This process is called maturation. Displays maximal activity during the budding process just prior to particle release from the cell. Also cleaves Nef and Vif, probably concomitantly with viral structural proteins on maturation of virus particles. Hydrolyzes host EIF4GI and PABP1 in order to shut off the capped cellular mRNA translation. The resulting inhibition of cellular protein synthesis serves to ensure maximal viral gene expression and to evade host immune response. Also mediates cleavage of host YTHDF3. Mediates cleavage of host CARD8, thereby activating the CARD8 inflammasome, leading to the clearance of latent HIV-1 in patient CD4(+) T-cells after viral reactivation; in contrast, HIV-1 can evade CARD8-sensing when its protease remains inactive in infected cells prior to viral budding. Multifunctional enzyme that converts the viral RNA genome into dsDNA in the cytoplasm, shortly after virus entry into the cell. This enzyme displays a DNA polymerase activity that can copy either DNA or RNA templates, and a ribonuclease H (RNase H) activity that cleaves the RNA strand of RNA-DNA heteroduplexes in a partially processive 3' to 5' endonucleasic mode. Conversion of viral genomic RNA into dsDNA requires many steps. A tRNA(3)-Lys binds to the primer-binding site (PBS) situated at the 5'-end of the viral RNA. RT uses the 3' end of the tRNA primer to perform a short round of RNA-dependent minus-strand DNA synthesis. The reading proceeds through the U5 region and ends after the repeated (R) region which is present at both ends of viral RNA. The portion of the RNA-DNA heteroduplex is digested by the RNase H, resulting in a ssDNA product attached to the tRNA primer. This ssDNA/tRNA hybridizes with the identical R region situated at the 3' end of viral RNA. This template exchange, known as minus-strand DNA strong stop transfer, can be either intra- or intermolecular. RT uses the 3' end of this newly synthesized short ssDNA to perform the RNA-dependent minus-strand DNA synthesis of the whole template. RNase H digests the RNA template except for two polypurine tracts (PPTs) situated at the 5'-end and near the center of the genome. It is not clear if both polymerase and RNase H activities are simultaneous. RNase H probably can proceed both in a polymerase-dependent (RNA cut into small fragments by the same RT performing DNA synthesis) and a polymerase-independent mode (cleavage of remaining RNA fragments by free RTs). Secondly, RT performs DNA-directed plus-strand DNA synthesis using the PPTs that have not been removed by RNase H as primers. PPTs and tRNA primers are then removed by RNase H. The 3' and 5' ssDNA PBS regions hybridize to form a circular dsDNA intermediate. Strand displacement synthesis by RT to the PBS and PPT ends produces a blunt ended, linear dsDNA copy of the viral genome that includes long terminal repeats (LTRs) at both ends. Functionally, catalyzes viral DNA integration into the host chromosome, by performing a series of DNA cutting and joining reactions. This enzyme activity takes place after virion entry into a cell and reverse transcription of the RNA genome in dsDNA. The first step in the integration process is 3' processing. This step requires a complex comprising the viral genome, matrix protein, Vpr and integrase. This complex is called the pre-integration complex (PIC). The integrase protein removes 2 nucleotides from each 3' end of the viral DNA, leaving recessed CA OH's at the 3' ends. In the second step, the PIC enters cell nucleus. This process is mediated through integrase and Vpr proteins, and allows the virus to infect a non dividing cell. This ability to enter the nucleus is specific of lentiviruses, other retroviruses cannot and rely on cell division to access cell chromosomes. In the third step, termed strand transfer, the integrase protein joins the previously processed 3' ends to the 5' ends of strands of target cellular DNA at the site of integration. The 5'-ends are produced by integrase-catalyzed staggered cuts, 5 bp apart. A Y-shaped, gapped, recombination intermediate results, with the 5'-ends of the viral DNA strands and the 3' ends of target DNA strands remaining unjoined, flanking a gap of 5 bp. The last step is viral DNA integration into host chromosome. This involves host DNA repair synthesis in which the 5 bp gaps between the unjoined strands are filled in and then ligated. Since this process occurs at both cuts flanking the HIV genome, a 5 bp duplication of host DNA is produced at the ends of HIV-1 integration. Alternatively, Integrase may catalyze the excision of viral DNA just after strand transfer, this is termed disintegration. This is Gag-Pol polyprotein (gag-pol) from Human immunodeficiency virus type 1 group M subtype F2 (isolate MP255) (HIV-1).